Here is a 1346-residue protein sequence, read N- to C-terminus: Adhesion G protein-coupled receptor F5 (1346 aa).

The first 21 residues, 1-21, serve as a signal peptide directing secretion; it reads MKSPRRTTLCLMFIVIYSSKA. Residues 22–1006 lie on the Extracellular side of the membrane; it reads ALNWNYESTI…MSPDSPDPSS (985 aa). N-linked (GlcNAc...) asparagine glycans are attached at residues N73, N94, N106, N188, N256, N272, N301, N315, N328, N398, N472, N487, N505, N540, N627, N649, N666, N820, N931, N963, and N982. Residues 166–273 form the SEA domain; it reads LQEDVTLNMR…NSFQAVTINE (108 aa). 3 Ig-like domains span residues 267-368, 369-466, and 471-561; these read QAVT…IDVM, PIQI…IKVT, and ANLT…KDVI. 2 cysteine pairs are disulfide-bonded: C293/C350 and C391/C449. Residues C492 and C545 are joined by a disulfide bond. The GAIN-B domain maps to 842-1003; that stretch reads PPLSFSQTNV…SILMSPDSPD (162 aa). Intrachain disulfides connect C954/C985 and C973/C987. Positions 954-1003 are GPS; it reads CVFWNFRLANNTGGWDSSGCYVEEGDGDNVTCICDHLTSFSILMSPDSPD. A tethered agonist region spans residues 991–1006; the sequence is TSFSILMSPDSPDPSS. A helical membrane pass occupies residues 1007–1027; that stretch reads LLGILLDIISYVGVGFSILSL. Over 1028–1053 the chain is Cytoplasmic; that stretch reads AACLVVEAVVWKSVTKNRTSYMRHTC. The helical transmembrane segment at 1054-1074 threads the bilayer; the sequence is IVNIAASLLVANTWFIVVAAI. Residues 1075 to 1090 are Extracellular-facing; the sequence is QDNRYILCKTACVAAT. Residues 1091–1111 traverse the membrane as a helical segment; it reads FFIHFFYLSVFFWMLTLGLML. Topologically, residues 1112–1128 are cytoplasmic; sequence FYRLVFILHETSRSTQK. A helical transmembrane segment spans residues 1129-1149; the sequence is AIAFCLGYGCPLAISVITLGA. Residues 1150 to 1173 are Extracellular-facing; that stretch reads TQPREVYTRKNVCWLNWEDTKALL. The helical transmembrane segment at 1174–1194 threads the bilayer; that stretch reads AFAIPALIIVVVNITITIVVI. Topologically, residues 1195–1220 are cytoplasmic; sequence TKILRPSIGDKPCKQEKSSLFQISKS. A helical membrane pass occupies residues 1221 to 1241; that stretch reads IGVLTPLLGLTWGFGLTTVFP. The Extracellular segment spans residues 1242-1244; the sequence is GTN. Residues 1245 to 1265 traverse the membrane as a helical segment; sequence LVFHIIFAILNVFQGLFILLF. Residues 1266 to 1346 lie on the Cytoplasmic side of the membrane; that stretch reads GCLWDLKVQE…NSSSASSLLN (81 aa). T1300 is subject to Phosphothreonine. S1307 carries the phosphoserine modification. Residues 1327–1346 are disordered; that stretch reads TPEATSSSLENSSSASSLLN. Positions 1329–1346 are enriched in low complexity; that stretch reads EATSSSLENSSSASSLLN.

It belongs to the G-protein coupled receptor 2 family. Adhesion G-protein coupled receptor (ADGR) subfamily. In terms of assembly, homodimer; disulfide-linked. Heterodimer of 2 chains generated by proteolytic processing; the large extracellular N-terminal fragment and the membrane-bound C-terminal fragment predominantly remain associated and non-covalently linked. Fragment generates by the processing enzyme furin remains attached to the extracellular N-terminal fragment. Interacts (via N-terminal extracellular domain) with SFTPD. In terms of processing, highly glycosylated. Proteolytically cleaved at multiple sites: one in the GPS region of the GAIN-B domain (S1 site) and the other in the SEA domain (S2 site). The proteolytic cleavage at S1 site generates an extracellular subunit and a seven-transmembrane subunit. The proteolytic cleavage at S2 site generates a fragment that undergoes proteolytic cleavage by the processing enzyme furin. Expressed in lung endothelial cells and in alveolar type II (ATII) cells (at protein level). Expressed high levels in subcutaneous adipose tissue in lean individuals and at lower levels in visceral fat. Expression levels in subcutaneous adipose tissue drastically drop in obese individuals.

The protein resides in the cell membrane. As an adhesion G protein-coupled receptor (aGPCR) exhibits a large N-terminal extracellular domain containing highly conserved GPCR autoproteolysis-inducing (GAIN) domain. During synthesis, intracellular autoproteolytic processing of nascent chain within the GAIN domain generates a mature protein, consisting of an N-terminal fragment that is non-covalently linked to the C-terminal fragment. The mature protein is routed to the plasma membrane where the N- and C-terminal fragments remain associated, forming the holoreceptor. Dissociation of the aGPCR fragments stimulates G protein signaling through the action of the tethered-peptide agonist stalk that is occluded within the GAIN domain in the holoreceptor form. This dissociation might be induced by ligand binding, such as that of sFNDC4. Adhesion G protein-coupled receptor. In alveolar type II (ATII or AT2) cells, required for normal lung surfactant homeostasis. Modulation of both surfactant secretion and uptake by ATII cells is mediated by the downstream activation of GNAQ/GNA11 proteins and may be a consequence of increased cortical F-actin assembly induced by ADGRF5 activation. In the kidney, may play a role in the regulation of acid excretion into the primary urine, possibly by regulating the surface expression of V-ATPase proton pump. As a receptor for soluble FNDC4 (sFNDC4), required for proper systemic glucose tolerance, specifically sensitizing white adipose tissue to insulin. Also plays a role in sFNDC4-induced decrease of local inflammation in white adipose tissue. This chain is Adhesion G protein-coupled receptor F5, found in Homo sapiens (Human).